A 533-amino-acid chain; its full sequence is Histone-arginine methyltransferase CARMER (533 aa).

Positions 143–452 (ASQYFQFYGY…QSYDVTIDLH (310 aa)) constitute an SAM-dependent MTase PRMT-type domain. 6 residues coordinate S-adenosyl-L-methionine: Gln-156, Arg-165, Gly-189, Glu-211, Glu-240, and Thr-268. The residue at position 503 (Arg-503) is an Asymmetric dimethylarginine; by autocatalysis.

It belongs to the class I-like SAM-binding methyltransferase superfamily. Protein arginine N-methyltransferase family. Homodimer. The dimethylated protein is the major form.

It is found in the cytoplasm. The protein resides in the nucleus. The catalysed reaction is L-arginyl-[protein] + 2 S-adenosyl-L-methionine = N(omega),N(omega)-dimethyl-L-arginyl-[protein] + 2 S-adenosyl-L-homocysteine + 2 H(+). Methylates (mono- and asymmetric dimethylation) the guanidino nitrogens of arginyl residues in proteins. May methylate histone H3 at 'Arg-17' and activate transcription via chromatin remodeling. This is Histone-arginine methyltransferase CARMER (Art4) from Drosophila willistoni (Fruit fly).